Consider the following 207-residue polypeptide: Urease accessory protein UreG (207 aa).

A GTP-binding site is contributed by 14–21 (GPVGSGKT).

This sequence belongs to the SIMIBI class G3E GTPase family. UreG subfamily. Homodimer. UreD, UreF and UreG form a complex that acts as a GTP-hydrolysis-dependent molecular chaperone, activating the urease apoprotein by helping to assemble the nickel containing metallocenter of UreC. The UreE protein probably delivers the nickel.

It localises to the cytoplasm. Facilitates the functional incorporation of the urease nickel metallocenter. This process requires GTP hydrolysis, probably effectuated by UreG. In Tolumonas auensis (strain DSM 9187 / NBRC 110442 / TA 4), this protein is Urease accessory protein UreG.